A 435-amino-acid chain; its full sequence is Cyclic 2,3-diphosphoglycerate synthetase (435 aa).

The protein belongs to the cyclic 2,3-diphosphoglycerate synthetase family.

The protein localises to the cytoplasm. It carries out the reaction (2R)-2,3-bisphosphoglycerate + ATP + H(+) = cyclic (2R)-2,3-bisphosphoglycerate + ADP + phosphate. Catalyzes the formation of cyclic 2,3-diphosphoglycerate (cDPG) by formation of an intramolecular phosphoanhydride bond at the expense of ATP. This chain is Cyclic 2,3-diphosphoglycerate synthetase, found in Pyrococcus horikoshii (strain ATCC 700860 / DSM 12428 / JCM 9974 / NBRC 100139 / OT-3).